Consider the following 208-residue polypeptide: MEAPPVTMMPVTGGTINMMEYLLQGSVLDHSLESLIHRLRGLCDNMEPETFVDHEMVFLLKGQQASPFVLRARRSLDRAGAPWHLRYLGQPEMGDKNRHALVRNCVDIATSENLTDFLMEMGFRMDHEFVARGHLFRKGIMKIVVYKIFRILVPGNTDNTEALSLSYLVELSVVAPAGQDMVSDDMRNFAEQLKPLVHLEKIDPKRLM.

The residue at position 66 (S66) is a Phosphoserine.

It belongs to the Mediator complex subunit 18 family. In terms of assembly, component of the Mediator complex, which is composed of MED1, MED4, MED6, MED7, MED8, MED9, MED10, MED11, MED12, MED13, MED13L, MED14, MED15, MED16, MED17, MED18, MED19, MED20, MED21, MED22, MED23, MED24, MED25, MED26, MED27, MED29, MED30, MED31, CCNC, CDK8 and CDC2L6/CDK11. The MED12, MED13, CCNC and CDK8 subunits form a distinct module termed the CDK8 module. Mediator containing the CDK8 module is less active than Mediator lacking this module in supporting transcriptional activation. Individual preparations of the Mediator complex lacking one or more distinct subunits have been variously termed ARC, CRSP, DRIP, PC2, SMCC and TRAP.

It is found in the nucleus. Functionally, component of the Mediator complex, a coactivator involved in the regulated transcription of nearly all RNA polymerase II-dependent genes. Mediator functions as a bridge to convey information from gene-specific regulatory proteins to the basal RNA polymerase II transcription machinery. Mediator is recruited to promoters by direct interactions with regulatory proteins and serves as a scaffold for the assembly of a functional preinitiation complex with RNA polymerase II and the general transcription factors. This Bos taurus (Bovine) protein is Mediator of RNA polymerase II transcription subunit 18 (MED18).